The sequence spans 122 residues: Large ribosomal subunit protein bL17 (122 aa).

It belongs to the bacterial ribosomal protein bL17 family. Part of the 50S ribosomal subunit. Contacts protein L32.

The chain is Large ribosomal subunit protein bL17 from Neisseria meningitidis serogroup B (strain ATCC BAA-335 / MC58).